The chain runs to 152 residues: MSRFVFILLCFIPHLGRADCWDKAGERYNIPSSLLKAIAEKESGFNKSAVNVNNNGSKDYGIMQINDFHSKRLREMGYSEEMLISHPCLSVHYAAKLLNEFMMMYGRGWEAVGAYNAGTSPKKKKERLKYAEDIYRRYLRIAAESKQNNRRI.

A signal peptide spans 1-17 (MSRFVFILLCFIPHLGR).

This sequence belongs to the IagB/IpgF/P19 family.

This is Protein IpgF (ipgF) from Shigella flexneri.